The following is a 101-amino-acid chain: Urease subunit beta (101 aa).

The protein belongs to the urease beta subunit family. In terms of assembly, heterotrimer of UreA (gamma), UreB (beta) and UreC (alpha) subunits. Three heterotrimers associate to form the active enzyme.

It localises to the cytoplasm. It carries out the reaction urea + 2 H2O + H(+) = hydrogencarbonate + 2 NH4(+). The protein operates within nitrogen metabolism; urea degradation; CO(2) and NH(3) from urea (urease route): step 1/1. The polypeptide is Urease subunit beta (Albidiferax ferrireducens (strain ATCC BAA-621 / DSM 15236 / T118) (Rhodoferax ferrireducens)).